Consider the following 189-residue polypeptide: dCTP deaminase, dUMP-forming (189 aa).

DCTP is bound by residues 101–106 (KSSLGR), D119, 127–129 (TLE), Q148, Y162, and Q174. Catalysis depends on E129, which acts as the Proton donor/acceptor.

This sequence belongs to the dCTP deaminase family. In terms of assembly, homotrimer.

The catalysed reaction is dCTP + 2 H2O = dUMP + NH4(+) + diphosphate. The protein operates within pyrimidine metabolism; dUMP biosynthesis; dUMP from dCTP: step 1/1. Functionally, bifunctional enzyme that catalyzes both the deamination of dCTP to dUTP and the hydrolysis of dUTP to dUMP without releasing the toxic dUTP intermediate. This is dCTP deaminase, dUMP-forming from Rhodococcus jostii (strain RHA1).